Here is a 670-residue protein sequence, read N- to C-terminus: Zinc finger protein 526 (670 aa).

C2H2-type zinc fingers lie at residues 57–79 (FMCSECGSLYNTLEEVLSHQEQH), 108–130 (FQCGECSQLILSPGELLAHQDAH), and 140–163 (YQCWDCQELFPSPELWVAHRKAQH). Disordered regions lie at residues 168 to 196 (VAEPPVPPPLPPPTPLPPPSPPSEVKMEP) and 217 to 304 (GTHF…ATHP). A compositionally biased stretch (pro residues) spans 171–189 (PPVPPPLPPPTPLPPPSPP). The segment at 197 to 219 (YECPECSTLCATPEEFLEHQGTH) adopts a C2H2-type 4 zinc-finger fold. Positions 217 to 231 (GTHFDSLEKEERNGL) are enriched in basic and acidic residues. Acidic residues predominate over residues 232-263 (EEEEEDDEEDEEDDEEMEDEEAMAEVGDDAVG). 9 C2H2-type zinc fingers span residues 305 to 327 (FHCSQCQRSFSSANRLQAHGRAH), 332 to 354 (HECTTCSKVFKKAASLEQHLRLH), 360 to 382 (YLCVDCGRGFGTELTLVAHRRAH), 388 to 409 (HRCRCGKTFSNMTKFLYHRRTH), 442 to 465 (LPCPQCSKSFASASRLSRHRRAVH), 472 to 494 (HRCGVCGKGFKKLIHVRNHLRTH), 500 to 522 (FQCHSCGKTFASLANLSRHQLTH), 528 to 550 (YQCLDCGKRFTQSSNLQQHRRLH), and 573 to 595 (YYCGTCGRWFRAMAGLRLHQRVH). The tract at residues 409 to 443 (HAGKSGAPPTGATAPPAPAEPTPPPPPPAPPAQLP) is disordered. Residues 423-442 (PPAPAEPTPPPPPPAPPAQL) show a composition bias toward pro residues. The interval 601-621 (LTLQPPRSPSPAPPPPPEPQQ) is disordered. Pro residues predominate over residues 606–619 (PRSPSPAPPPPPEP).

Belongs to the krueppel C2H2-type zinc-finger protein family. Widely expressed.

Its subcellular location is the nucleus. May be involved in transcriptional regulation. This is Zinc finger protein 526 (ZNF526) from Homo sapiens (Human).